The chain runs to 285 residues: NADPH-dependent 7-cyano-7-deazaguanine reductase (285 aa).

91–93 (IES) is a substrate binding site. 93–94 (SK) contributes to the NADPH binding site. The active-site Thioimide intermediate is the Cys-191. The active-site Proton donor is the Asp-198. A substrate-binding site is contributed by 230–231 (HE). 259–260 (RG) contributes to the NADPH binding site.

The protein belongs to the GTP cyclohydrolase I family. QueF type 2 subfamily. In terms of assembly, homodimer.

It is found in the cytoplasm. It catalyses the reaction 7-aminomethyl-7-carbaguanine + 2 NADP(+) = 7-cyano-7-deazaguanine + 2 NADPH + 3 H(+). The protein operates within tRNA modification; tRNA-queuosine biosynthesis. Its function is as follows. Catalyzes the NADPH-dependent reduction of 7-cyano-7-deazaguanine (preQ0) to 7-aminomethyl-7-deazaguanine (preQ1). In Legionella pneumophila (strain Corby), this protein is NADPH-dependent 7-cyano-7-deazaguanine reductase.